Consider the following 56-residue polypeptide: Potassium channel toxin alpha-KTx 9.8 (56 aa).

The N-terminal stretch at 1–19 (MSRLFTLVLIVLAMNVMMA) is a signal peptide. The propeptide occupies 20-28 (IISDPVVEA). Disulfide bonds link Cys-31-Cys-47, Cys-34-Cys-52, and Cys-38-Cys-54.

This sequence belongs to the short scorpion toxin superfamily. Potassium channel inhibitor family. Alpha-KTx 09 subfamily. As to expression, expressed by the venom gland.

It is found in the secreted. Its function is as follows. Potassium channel inhibitor. The polypeptide is Potassium channel toxin alpha-KTx 9.8 (Buthus israelis (Israeli scorpion)).